We begin with the raw amino-acid sequence, 337 residues long: Fructose-1,6-bisphosphatase class 1 (337 aa).

Glu94, Asp116, Leu118, and Asp119 together coordinate Mg(2+). Substrate contacts are provided by residues 119–122 (DGSS), Asn210, and Lys276. Glu282 provides a ligand contact to Mg(2+).

It belongs to the FBPase class 1 family. As to quaternary structure, homotetramer. It depends on Mg(2+) as a cofactor.

The protein resides in the cytoplasm. It carries out the reaction beta-D-fructose 1,6-bisphosphate + H2O = beta-D-fructose 6-phosphate + phosphate. The protein operates within carbohydrate biosynthesis; gluconeogenesis. In Burkholderia vietnamiensis (strain G4 / LMG 22486) (Burkholderia cepacia (strain R1808)), this protein is Fructose-1,6-bisphosphatase class 1.